The following is a 431-amino-acid chain: tRNA(Ile)-lysidine synthase (431 aa).

26 to 31 (SGGIDS) is a binding site for ATP.

Belongs to the tRNA(Ile)-lysidine synthase family.

It is found in the cytoplasm. The catalysed reaction is cytidine(34) in tRNA(Ile2) + L-lysine + ATP = lysidine(34) in tRNA(Ile2) + AMP + diphosphate + H(+). Its function is as follows. Ligates lysine onto the cytidine present at position 34 of the AUA codon-specific tRNA(Ile) that contains the anticodon CAU, in an ATP-dependent manner. Cytidine is converted to lysidine, thus changing the amino acid specificity of the tRNA from methionine to isoleucine. The polypeptide is tRNA(Ile)-lysidine synthase (Wolbachia sp. subsp. Brugia malayi (strain TRS)).